A 64-amino-acid chain; its full sequence is Alpha-conotoxin GI (64 aa).

The first 21 residues, 1-21 (MGMRMMFTVFLLVVLATTVVS), serve as a signal peptide directing secretion. The propeptide occupies 22–49 (FPSERASDGRDDTAKDEGSDMDKLVEKK). Intrachain disulfides connect Cys-51–Cys-56 and Cys-52–Cys-62. The residue at position 62 (Cys-62) is a Cysteine amide.

The protein belongs to the conotoxin A superfamily. In terms of processing, not hydroxylated; hydroxylation, on a synthetic hydroxylated GI, improves its folding but impairs its activity against target receptors. As to expression, expressed by the venom duct.

It localises to the secreted. Alpha-conotoxins act on postsynaptic membranes, they bind to the nicotinic acetylcholine receptors (nAChR) and thus inhibit them. Reversibly inhibits mammalian muscle nAChR (IC(50)=339 nM on adult subtype (alpha-1-beta-1-gamma-delta/CHRNA1-CHRNB1-CHRNG-CHRND) and IC(50)=5.86-995 nM on fetal subtype (alpha-1-beta-1-delta-epsilon/CHRNA1-CHRNB1-CHRND-CHRNE)). The higher affinity site is the alpha/delta site on mouse muscle-derived BC3H-1 receptor, and the other site (alpha/gamma site) on nicotinic receptors from Torpedo californica electric organ. The sequence is that of Alpha-conotoxin GI from Conus geographus (Geography cone).